We begin with the raw amino-acid sequence, 439 residues long: Adenylosuccinate synthetase (439 aa).

Residues 25-31 and 53-55 each bind GTP; these read GDEGKGK and GHT. Asp-26 serves as the catalytic Proton acceptor. Mg(2+)-binding residues include Asp-26 and Gly-53. IMP contacts are provided by residues 26–29, 51–54, Thr-146, Arg-160, Asn-237, Thr-252, and Arg-316; these read DEGK and NAGH. The Proton donor role is filled by His-54. Position 312–318 (312–318) interacts with substrate; the sequence is VTTGRRR. GTP-binding positions include Arg-318, 344–346, and 426–428; these read KLD and GVG.

This sequence belongs to the adenylosuccinate synthetase family. Homodimer. The cofactor is Mg(2+).

It localises to the cytoplasm. The catalysed reaction is IMP + L-aspartate + GTP = N(6)-(1,2-dicarboxyethyl)-AMP + GDP + phosphate + 2 H(+). The protein operates within purine metabolism; AMP biosynthesis via de novo pathway; AMP from IMP: step 1/2. Functionally, plays an important role in the de novo pathway and in the salvage pathway of purine nucleotide biosynthesis. Catalyzes the first committed step in the biosynthesis of AMP from IMP. In Mycosarcoma maydis (Corn smut fungus), this protein is Adenylosuccinate synthetase.